Here is a 399-residue protein sequence, read N- to C-terminus: Elongation factor Tu (399 aa).

One can recognise a tr-type G domain in the interval 10 to 204 (KPHVNIGTIG…AVDANIPEPE (195 aa)). The tract at residues 19–26 (GHVDHGKT) is G1. Residue 19-26 (GHVDHGKT) coordinates GTP. A Mg(2+)-binding site is contributed by threonine 26. Positions 60–64 (GITIN) are G2. The tract at residues 81 to 84 (DCPG) is G3. Residues 81 to 85 (DCPGH) and 136 to 139 (NKCD) each bind GTP. Residues 136-139 (NKCD) are G4. The tract at residues 174–176 (SGL) is G5.

Belongs to the TRAFAC class translation factor GTPase superfamily. Classic translation factor GTPase family. EF-Tu/EF-1A subfamily. In terms of assembly, monomer.

Its subcellular location is the cytoplasm. It catalyses the reaction GTP + H2O = GDP + phosphate + H(+). Functionally, GTP hydrolase that promotes the GTP-dependent binding of aminoacyl-tRNA to the A-site of ribosomes during protein biosynthesis. The sequence is that of Elongation factor Tu from Synechococcus sp. (strain WH7803).